We begin with the raw amino-acid sequence, 463 residues long: Immune-associated nucleotide-binding protein 10 (463 aa).

The 209-residue stretch at 3–211 (EPIKNIVLVG…YTYQLHRKIK (209 aa)) folds into the AIG1-type G domain. The G1 stretch occupies residues 12–19 (GRTGNGKS). GTP contacts are provided by residues 12-20 (GRTGNGKSS) and S33. The tract at residues 39–43 (GVTMI) is G2. The tract at residues 61 to 64 (DTPG) is G3. The G4 stretch occupies residues 131 to 134 (TGGD). The tract at residues 170 to 172 (DNK) is G5. A GTP-binding site is contributed by N171. Positions 173 to 308 (SKDEKKKVEQ…KQLIAQANRM (136 aa)) form a coiled coil.

This sequence belongs to the TRAFAC class TrmE-Era-EngA-EngB-Septin-like GTPase superfamily. AIG1/Toc34/Toc159-like paraseptin GTPase family. IAN subfamily. As to expression, expressed in radicles of the germinating seeds.

The chain is Immune-associated nucleotide-binding protein 10 from Arabidopsis thaliana (Mouse-ear cress).